Reading from the N-terminus, the 143-residue chain is Large ribosomal subunit protein uL15 (143 aa).

The interval 1–48 is disordered; the sequence is MRLNTISPSKGAKHSSKRLGRGIGSGLGKTSGRGHKGQKARSGCSIHR. A compositionally biased stretch (basic residues) spans 11-20; that stretch reads GAKHSSKRLG. Residues 21-31 show a composition bias toward gly residues; that stretch reads RGIGSGLGKTS.

The protein belongs to the universal ribosomal protein uL15 family. As to quaternary structure, part of the 50S ribosomal subunit.

Functionally, binds to the 23S rRNA. The polypeptide is Large ribosomal subunit protein uL15 (Baumannia cicadellinicola subsp. Homalodisca coagulata).